The following is a 600-amino-acid chain: Na(+)/dicarboxylate cotransporter 3 (600 aa).

At 1–16 (MAALAALAKKVWSARR) the chain is on the cytoplasmic side. The chain crosses the membrane as a helical span at residues 17–37 (LLVLLLVPLALLPILFALPPK). Residues 38 to 55 (EGRCLYVILLMAVYWCTE) lie on the Extracellular side of the membrane. Residues 56–76 (ALPLSVTALLPIILFPFMGIL) form a helical membrane-spanning segment. The Cytoplasmic portion of the chain corresponds to 77-82 (PSSKVC). A helical transmembrane segment spans residues 83 to 103 (PQYFLDTNFLFLSGLIMASAI). Residues 104–137 (EEWNLHRRIALKVLMLVGVQPARLILGMMVTTSF) are Extracellular-facing. A helical membrane pass occupies residues 138-158 (LSMWLSNTASTAMMLPIASAI). Over 159 to 229 (LKSLFGQREA…KEEEHRRNIW (71 aa)) the chain is Cytoplasmic. A helical transmembrane segment spans residues 230 to 250 (KGFLISIPYSASIGGTATLTG). Topologically, residues 251–278 (TAPNLILLGQLKSFFPQCDVVNFGSWFI) are extracellular. Residues 279–299 (FAFPLMLLFLLVGWLWISFLY) traverse the membrane as a helical segment. Residues 300–336 (GGMSWRSWRKKKSKIRADAEDQAKAVIQEEFQNLGPI) lie on the Cytoplasmic side of the membrane. A helical transmembrane segment spans residues 337–357 (KFAEQAVFILFCTFAILLFSR). The Extracellular segment spans residues 358 to 372 (DPKFIPGWASLFAPG). Residues 373–393 (FVSDAVTGVAIVTILFFFPSQ) traverse the membrane as a helical segment. At 394–422 (KPSLKWWFDFKAPNSETEPLLSWKKAQET) the chain is on the cytoplasmic side. The segment at residues 423–443 (VPWNIILLLGGGFAMAKGCEE) is an intramembrane region (helical). At 444–461 (SGLSAWIGGQLHPLEHVP) the chain is on the cytoplasmic side. A helical transmembrane segment spans residues 462-482 (PLLAVLLITVVIAFFTEFASN). The Extracellular segment spans residues 483 to 505 (TATIIIFLPVLAELAIRLHVHPL). The chain crosses the membrane as a helical span at residues 506–526 (YLMIPGTVGCSYAFMLPVSTP). The Cytoplasmic segment spans residues 527–546 (PNSIAFSTGHLLVKDMVRTG). A helical transmembrane segment spans residues 547–567 (LLMNLMGVLLLSLAMNTWAQT). Residues 568 to 600 (IFQLGTFPDWANTHAANATALPPALTNNTVQTF) are Extracellular-facing. Residues N584 and N594 are each glycosylated (N-linked (GlcNAc...) asparagine).

The protein belongs to the SLC13A/DASS transporter (TC 2.A.47) family. NADC subfamily. As to expression, highly expressed in kidney, and at much lower levels in brain.

It is found in the cell membrane. It carries out the reaction succinate(out) + 3 Na(+)(out) = succinate(in) + 3 Na(+)(in). The catalysed reaction is 2-oxoglutarate(out) + 3 Na(+)(out) = 2-oxoglutarate(in) + 3 Na(+)(in). The enzyme catalyses N-acetyl-L-aspartate(out) + 3 Na(+)(out) = N-acetyl-L-aspartate(in) + 3 Na(+)(in). It catalyses the reaction fumarate(out) + 3 Na(+)(out) = fumarate(in) + 3 Na(+)(in). It carries out the reaction glutarate(out) + 3 Na(+)(out) = glutarate(in) + 3 Na(+)(in). The catalysed reaction is 2,2-dimethylsuccinate(out) + 3 Na(+)(out) = 2,2-dimethylsuccinate(in) + 3 Na(+)(in). The enzyme catalyses 2,3-dimethylsuccinate(out) + 3 Na(+)(out) = 2,3-dimethylsuccinate(in) + 3 Na(+)(in). It catalyses the reaction malate(out) + 3 Na(+)(out) = malate(in) + 3 Na(+)(in). It carries out the reaction itaconate(out) + 3 Na(+)(out) = itaconate(in) + 3 Na(+)(in). Its function is as follows. High-affinity sodium-dicarboxylate cotransporter that accepts a range of substrates with 4-6 carbon atoms, such as the citric acid cycle intermediates succinate and alpha-ketoglutarate (2-oxoglutarate), as well as other compounds including N-acetyl-L-aspartate. Transports the dicarboxylate into the cell with a probable stoichiometry of 3 Na(+) for 1 divalent dicarboxylate, rendering the process electrogenic. Can transport citrate in a Na(+)-dependent manner, recognizing the divalent form of citrate rather than the trivalent form which is normally found in blood. Imports itaconate in hepatocytes leading to activation of TFEB-dependent lysosomal biogenesis involved in antibacterial innate immune response. The polypeptide is Na(+)/dicarboxylate cotransporter 3 (Slc13a3) (Mus musculus (Mouse)).